The sequence spans 188 residues: Ras-related protein Rap-1 (188 aa).

Residue 10-17 (GSGGVGKS) coordinates GTP. Positions 32–40 (YDPTIEDSY) match the Effector region motif. Residues 57–61 (DTAGT) and 116–119 (NKCD) contribute to the GTP site.

It belongs to the small GTPase superfamily. Ras family.

The catalysed reaction is GTP + H2O = GDP + phosphate + H(+). Functionally, required in the hypodermis for proper formation of the cuticle. The sequence is that of Ras-related protein Rap-1 (rap-1) from Caenorhabditis elegans.